The primary structure comprises 1487 residues: Probable serine/threonine-protein kinase roco11 (1487 aa).

Residues 108–134 (TQPSSSHNHSNHHHHHHQQQLQQQQQQ) form a disordered region. Basic residues predominate over residues 116 to 125 (HSNHHHHHHQ). LRR repeat units follow at residues 295 to 316 (NLAE…ICQL), 318 to 340 (HLKI…ANLT), and 341 to 362 (NLKY…IIEQ). Residues 379 to 564 (KSETWNKVKL…KILTNEAEKS (186 aa)) form the Roc domain. The interval 379-564 (KSETWNKVKL…KILTNEAEKS (186 aa)) is small GTPase-like. GTP is bound by residues 392-399 (GQEGVGKS), 448-452 (DFGGQ), and 507-510 (THCD). The region spanning 678–872 (VNQKYIDYND…KTYWANGILL (195 aa)) is the COR domain. The segment at 891-1007 (SILPNNSSST…NNNNNNNNNI (117 aa)) is disordered. Low complexity predominate over residues 897-931 (SSSTSSSTSSSTSSSTSSSSSSSTSSSSTSTTTTT). The segment covering 932–950 (VQIQSSPFGNSTTIVNKLT) has biased composition (polar residues). Residues 951–1007 (NIDNNNNNNNNNNNNNNNNNNINNNNNNNNNNNNNNNNNNNNNNNNNNNNNNNNNNI) show a composition bias toward low complexity. The Protein kinase domain maps to 1185-1452 (VVCEEQIGVG…YIVKELTNFY (268 aa)). Residues 1191 to 1199 (IGVGGFGLV) and lysine 1216 each bind ATP. Aspartate 1313 serves as the catalytic Proton acceptor. The segment at 1464-1487 (KSINDKSPHPDLISNGVPKLQIAK) is disordered.

Belongs to the protein kinase superfamily. TKL Ser/Thr protein kinase family. ROCO subfamily.

The catalysed reaction is L-seryl-[protein] + ATP = O-phospho-L-seryl-[protein] + ADP + H(+). The enzyme catalyses L-threonyl-[protein] + ATP = O-phospho-L-threonyl-[protein] + ADP + H(+). In Dictyostelium discoideum (Social amoeba), this protein is Probable serine/threonine-protein kinase roco11 (roco11).